A 98-amino-acid polypeptide reads, in one-letter code: NADH-ubiquinone oxidoreductase chain 4L (98 aa).

The next 3 membrane-spanning stretches (helical) occupy residues Pro2–Phe22, Ser29–Leu49, and Ile61–Val81.

Belongs to the complex I subunit 4L family. In terms of assembly, core subunit of respiratory chain NADH dehydrogenase (Complex I) which is composed of 45 different subunits.

It localises to the mitochondrion inner membrane. It carries out the reaction a ubiquinone + NADH + 5 H(+)(in) = a ubiquinol + NAD(+) + 4 H(+)(out). Its function is as follows. Core subunit of the mitochondrial membrane respiratory chain NADH dehydrogenase (Complex I) which catalyzes electron transfer from NADH through the respiratory chain, using ubiquinone as an electron acceptor. Part of the enzyme membrane arm which is embedded in the lipid bilayer and involved in proton translocation. This Hapalemur aureus (Golden bamboo lemur) protein is NADH-ubiquinone oxidoreductase chain 4L (MT-ND4L).